The chain runs to 167 residues: SsrA-binding protein (167 aa).

Basic and acidic residues predominate over residues 139–158 (QNHDKRDAAKDRDWQRDKQR). Positions 139-167 (QNHDKRDAAKDRDWQRDKQRVMRRHNRDA) are disordered.

The protein belongs to the SmpB family.

The protein localises to the cytoplasm. In terms of biological role, required for rescue of stalled ribosomes mediated by trans-translation. Binds to transfer-messenger RNA (tmRNA), required for stable association of tmRNA with ribosomes. tmRNA and SmpB together mimic tRNA shape, replacing the anticodon stem-loop with SmpB. tmRNA is encoded by the ssrA gene; the 2 termini fold to resemble tRNA(Ala) and it encodes a 'tag peptide', a short internal open reading frame. During trans-translation Ala-aminoacylated tmRNA acts like a tRNA, entering the A-site of stalled ribosomes, displacing the stalled mRNA. The ribosome then switches to translate the ORF on the tmRNA; the nascent peptide is terminated with the 'tag peptide' encoded by the tmRNA and targeted for degradation. The ribosome is freed to recommence translation, which seems to be the essential function of trans-translation. This chain is SsrA-binding protein, found in Xanthomonas euvesicatoria pv. vesicatoria (strain 85-10) (Xanthomonas campestris pv. vesicatoria).